The following is a 183-amino-acid chain: MEAPCPDKIWQDAGGAFAIGYVLMGVVNIGLGFKRSPPNKRVLYTFALLRKKSPKFGGNFAIWGSLFSGFDCTLSYIRKTEDTVNPIAAGALTGGILAARSGWKHSVQAAAFGGIFIGIIEAFQHMMQKRMQAQQEEMTQQHLEERKRYEEERKQREGERKKLNENGKSKKNKQQQNGENDLD.

3 helical membrane passes run 13–33 (AGGA…GLGF), 57–77 (GGNF…LSYI), and 107–127 (VQAA…QHMM). The segment covering 131-141 (MQAQQEEMTQQ) has biased composition (polar residues). Residues 131 to 183 (MQAQQEEMTQQHLEERKRYEEERKQREGERKKLNENGKSKKNKQQQNGENDLD) are disordered. Basic and acidic residues predominate over residues 142–168 (HLEERKRYEEERKQREGERKKLNENGK). Residues 174-183 (QQQNGENDLD) are compositionally biased toward low complexity.

The protein belongs to the Tim17/Tim22/Tim23 family.

It is found in the mitochondrion inner membrane. Its function is as follows. May be involved in the translocation of transit peptide-containing proteins across the mitochondrial inner membrane. The sequence is that of Mitochondrial import inner membrane translocase subunit tim17 (timm17) from Dictyostelium discoideum (Social amoeba).